Reading from the N-terminus, the 767-residue chain is GPI ethanolamine phosphate transferase 2 (767 aa).

Asparagine 186 and asparagine 401 each carry an N-linked (GlcNAc...) asparagine glycan. The next 2 helical transmembrane spans lie at leucine 407–glycine 427 and valine 434–valine 454. An N-linked (GlcNAc...) asparagine glycan is attached at asparagine 490. Transmembrane regions (helical) follow at residues isoleucine 513 to serine 533, isoleucine 538 to valine 558, and isoleucine 595 to alanine 615. Asparagine 627 is a glycosylation site (N-linked (GlcNAc...) asparagine). The next 3 membrane-spanning stretches (helical) occupy residues serine 655–alanine 675, threonine 695–leucine 715, and leucine 733–leucine 755.

It belongs to the PIGG/PIGN/PIGO family. PIGG subfamily.

It is found in the endoplasmic reticulum membrane. Its pathway is glycolipid biosynthesis; glycosylphosphatidylinositol-anchor biosynthesis. In terms of biological role, ethanolamine phosphate transferase involved in glycosylphosphatidylinositol-anchor biosynthesis. Transfers ethanolamine phosphate to the GPI second mannose. The chain is GPI ethanolamine phosphate transferase 2 (las21) from Aspergillus fumigatus (strain ATCC MYA-4609 / CBS 101355 / FGSC A1100 / Af293) (Neosartorya fumigata).